A 450-amino-acid chain; its full sequence is Grayanic acid biosynthesis cluster O-methyltransferase (450 aa).

An S-adenosyl-L-methionine-binding site is contributed by Asp-254. His-301 (proton acceptor) is an active-site residue.

This sequence belongs to the class I-like SAM-binding methyltransferase superfamily. Cation-independent O-methyltransferase family. COMT subfamily.

It functions in the pathway secondary metabolite biosynthesis. In terms of biological role, non-reducing polyketide synthase; part of the gene cluster that mediates the biosynthesis of orcinol depsidone grayanic acid (GRA), the only major secondary metabolite known in C.grayi. The first step consists in the ring and depside synthesis by PKS16 leading to 4-O-demethylsphaerophorin, involving different orcinol-like rings, one with acetyl CoA and the other with octanoyl CoA as the starter. Further depsidone formation by the GRA cluster-specific cytochrome P450 leads to 4-O-demethylgrayanic acid. Finally, the cluster specific O-methyltransferase probably converts the 4-O-demethylgrayanic acid into grayanic acid. The protein is Grayanic acid biosynthesis cluster O-methyltransferase of Cladonia grayi (Gray's cup lichen).